Consider the following 24-residue polypeptide: Brevinin-1BYc (24 aa).

Cysteine 18 and cysteine 24 are oxidised to a cystine.

Expressed by the skin glands.

The protein resides in the secreted. In terms of biological role, antibacterial activity against Gram-positive bacterium S.aureus. Weak antifungal activity against C.albicans. The chain is Brevinin-1BYc from Rana boylii (Foothill yellow-legged frog).